We begin with the raw amino-acid sequence, 726 residues long: Catalase-peroxidase (726 aa).

The segment at Met-1–Ser-33 is disordered. A cross-link (tryptophyl-tyrosyl-methioninium (Trp-Tyr) (with M-252)) is located at residues Trp-105–Tyr-226. His-106 acts as the Proton acceptor in catalysis. A cross-link (tryptophyl-tyrosyl-methioninium (Tyr-Met) (with W-105)) is located at residues Tyr-226–Met-252. His-267 lines the heme b pocket.

The protein belongs to the peroxidase family. Peroxidase/catalase subfamily. Homodimer or homotetramer. Requires heme b as cofactor. Formation of the three residue Trp-Tyr-Met cross-link is important for the catalase, but not the peroxidase activity of the enzyme.

It catalyses the reaction H2O2 + AH2 = A + 2 H2O. The catalysed reaction is 2 H2O2 = O2 + 2 H2O. Functionally, bifunctional enzyme with both catalase and broad-spectrum peroxidase activity. The chain is Catalase-peroxidase from Salmonella paratyphi B (strain ATCC BAA-1250 / SPB7).